The chain runs to 216 residues: ATP-dependent Clp protease proteolytic subunit 1 (216 aa).

Residue Ser-119 is the Nucleophile of the active site. His-144 is a catalytic residue.

Belongs to the peptidase S14 family. As to quaternary structure, fourteen ClpP subunits assemble into 2 heptameric rings which stack back to back to give a disk-like structure with a central cavity, resembling the structure of eukaryotic proteasomes.

The protein localises to the cytoplasm. It carries out the reaction Hydrolysis of proteins to small peptides in the presence of ATP and magnesium. alpha-casein is the usual test substrate. In the absence of ATP, only oligopeptides shorter than five residues are hydrolyzed (such as succinyl-Leu-Tyr-|-NHMec, and Leu-Tyr-Leu-|-Tyr-Trp, in which cleavage of the -Tyr-|-Leu- and -Tyr-|-Trp bonds also occurs).. Its function is as follows. Cleaves peptides in various proteins in a process that requires ATP hydrolysis. Has a chymotrypsin-like activity. Plays a major role in the degradation of misfolded proteins. The protein is ATP-dependent Clp protease proteolytic subunit 1 of Cutibacterium acnes (strain DSM 16379 / KPA171202) (Propionibacterium acnes).